Reading from the N-terminus, the 398-residue chain is Acetate kinase (398 aa).

Asparagine 7 is a Mg(2+) binding site. Position 14 (lysine 14) interacts with ATP. Arginine 91 serves as a coordination point for substrate. Aspartate 148 serves as the catalytic Proton donor/acceptor. ATP is bound by residues 208–212 (HIGNG), 283–285 (DLR), and 331–335 (GVGEN). Mg(2+) is bound at residue glutamate 385.

It belongs to the acetokinase family. Homodimer. It depends on Mg(2+) as a cofactor. The cofactor is Mn(2+).

The protein resides in the cytoplasm. The catalysed reaction is acetate + ATP = acetyl phosphate + ADP. The protein operates within metabolic intermediate biosynthesis; acetyl-CoA biosynthesis; acetyl-CoA from acetate: step 1/2. In terms of biological role, catalyzes the formation of acetyl phosphate from acetate and ATP. Can also catalyze the reverse reaction. The protein is Acetate kinase of Porphyromonas gingivalis (strain ATCC 33277 / DSM 20709 / CIP 103683 / JCM 12257 / NCTC 11834 / 2561).